A 216-amino-acid polypeptide reads, in one-letter code: Large ribosomal subunit protein uL1 (216 aa).

The protein belongs to the universal ribosomal protein uL1 family. In terms of assembly, part of the 50S ribosomal subunit.

Binds directly to 23S rRNA. Probably involved in E site tRNA release. Functionally, protein L1 is also a translational repressor protein, it controls the translation of its operon by binding to its mRNA. The sequence is that of Large ribosomal subunit protein uL1 from Thermococcus kodakarensis (strain ATCC BAA-918 / JCM 12380 / KOD1) (Pyrococcus kodakaraensis (strain KOD1)).